The following is a 244-amino-acid chain: Ubiquinone biosynthesis O-methyltransferase (244 aa).

S-adenosyl-L-methionine-binding residues include arginine 36, glycine 60, aspartate 81, and leucine 123.

This sequence belongs to the methyltransferase superfamily. UbiG/COQ3 family.

The catalysed reaction is a 3-demethylubiquinol + S-adenosyl-L-methionine = a ubiquinol + S-adenosyl-L-homocysteine + H(+). It catalyses the reaction a 3-(all-trans-polyprenyl)benzene-1,2-diol + S-adenosyl-L-methionine = a 2-methoxy-6-(all-trans-polyprenyl)phenol + S-adenosyl-L-homocysteine + H(+). It functions in the pathway cofactor biosynthesis; ubiquinone biosynthesis. O-methyltransferase that catalyzes the 2 O-methylation steps in the ubiquinone biosynthetic pathway. This chain is Ubiquinone biosynthesis O-methyltransferase, found in Rickettsia felis (strain ATCC VR-1525 / URRWXCal2) (Rickettsia azadi).